The following is a 957-amino-acid chain: Glycine dehydrogenase (decarboxylating) (957 aa).

Lysine 708 is modified (N6-(pyridoxal phosphate)lysine).

It belongs to the GcvP family. The glycine cleavage system is composed of four proteins: P, T, L and H. Pyridoxal 5'-phosphate is required as a cofactor.

The enzyme catalyses N(6)-[(R)-lipoyl]-L-lysyl-[glycine-cleavage complex H protein] + glycine + H(+) = N(6)-[(R)-S(8)-aminomethyldihydrolipoyl]-L-lysyl-[glycine-cleavage complex H protein] + CO2. Its function is as follows. The glycine cleavage system catalyzes the degradation of glycine. The P protein binds the alpha-amino group of glycine through its pyridoxal phosphate cofactor; CO(2) is released and the remaining methylamine moiety is then transferred to the lipoamide cofactor of the H protein. This chain is Glycine dehydrogenase (decarboxylating), found in Salmonella paratyphi B (strain ATCC BAA-1250 / SPB7).